We begin with the raw amino-acid sequence, 622 residues long: Low affinity potassium transport system protein Kup (622 aa).

Transmembrane regions (helical) follow at residues 9-29, 49-69, 103-123, 137-157, 165-185, 213-233, 247-267, 276-296, 337-357, 363-383, 396-416, and 419-439; these read LPAI…TSPL, VFGF…IKYL, VIMG…TPAI, PQLD…LFMI, VGKL…VLGL, VSFI…ALYA, WFTV…ALLL, PFFL…AALA, IYIP…IVSF, LAAA…ILST, FVAL…SANL, and LLSG…IMTT.

This sequence belongs to the HAK/KUP transporter (TC 2.A.72) family.

It is found in the cell inner membrane. It carries out the reaction K(+)(in) + H(+)(in) = K(+)(out) + H(+)(out). Its function is as follows. Responsible for the low-affinity transport of potassium into the cell. Likely operates as a K(+):H(+) symporter. In Salmonella paratyphi B (strain ATCC BAA-1250 / SPB7), this protein is Low affinity potassium transport system protein Kup.